A 237-amino-acid chain; its full sequence is MOB kinase activator 2 (237 aa).

Residues 1–21 (MDWLMGKSKAKPNGKKPAAEE) form a disordered region. Residues Cys-78, Cys-83, His-157, and His-162 each coordinate Zn(2+). Positions 217–229 (GGSGDGAGSGGPG) are enriched in gly residues. The interval 217 to 237 (GGSGDGAGSGGPGAQNHVKER) is disordered.

It belongs to the MOB1/phocein family. In terms of assembly, binds STK38 and STK38L. Post-translationally, phosphorylated.

It is found in the nucleus. Its subcellular location is the cytoplasm. The protein resides in the perinuclear region. In terms of biological role, stimulates the autophosphorylation and kinase activity of STK38 and STK38L. The polypeptide is MOB kinase activator 2 (MOB2) (Homo sapiens (Human)).